The primary structure comprises 102 residues: NADH-quinone oxidoreductase subunit K (102 aa).

Helical transmembrane passes span 6-26 (MHHGLLLAAILFALGMIGILV), 30-50 (LIFILMSIEIMLNAAGLAFVV), and 64-84 (FIFILSVAAAEVSVGLALLLL).

Belongs to the complex I subunit 4L family. As to quaternary structure, NDH-1 is composed of 14 different subunits. Subunits NuoA, H, J, K, L, M, N constitute the membrane sector of the complex.

Its subcellular location is the cell inner membrane. It carries out the reaction a quinone + NADH + 5 H(+)(in) = a quinol + NAD(+) + 4 H(+)(out). Functionally, NDH-1 shuttles electrons from NADH, via FMN and iron-sulfur (Fe-S) centers, to quinones in the respiratory chain. The immediate electron acceptor for the enzyme in this species is believed to be ubiquinone. Couples the redox reaction to proton translocation (for every two electrons transferred, four hydrogen ions are translocated across the cytoplasmic membrane), and thus conserves the redox energy in a proton gradient. The polypeptide is NADH-quinone oxidoreductase subunit K (Nitrosospira multiformis (strain ATCC 25196 / NCIMB 11849 / C 71)).